The primary structure comprises 182 residues: Thioredoxin F-type, chloroplastic (182 aa).

The interval 1–22 is disordered; it reads MPLSLRLAPSPTALSPTTGGFS. In terms of domain architecture, Thioredoxin spans 52–177; it reads KRGDSSVVRC…LVAAIETARS (126 aa). Residues Cys102 and Cys105 each act as nucleophile in the active site. A disulfide bridge connects residues Cys102 and Cys105.

It belongs to the thioredoxin family. Plant F-type subfamily. In terms of assembly, forms a complex with heterodimeric ferredoxin-thioredoxin reductase (FTR) and ferredoxin.

Its subcellular location is the plastid. The protein resides in the chloroplast. Functionally, participates in various redox reactions through the reversible oxidation of the active center dithiol to a disulfide. The F form is known to activate a number of enzymes of the photosynthetic carbon cycle. This chain is Thioredoxin F-type, chloroplastic (TRXF), found in Brassica napus (Rape).